The following is a 99-amino-acid chain: UPF0473 protein Athe_1150 (99 aa).

The protein belongs to the UPF0473 family.

This is UPF0473 protein Athe_1150 from Caldicellulosiruptor bescii (strain ATCC BAA-1888 / DSM 6725 / KCTC 15123 / Z-1320) (Anaerocellum thermophilum).